Here is a 326-residue protein sequence, read N- to C-terminus: DNA-directed RNA polymerase subunit alpha (326 aa).

Residues M1–G230 form an alpha N-terminal domain (alpha-NTD) region. An alpha C-terminal domain (alpha-CTD) region spans residues D249–E326.

The protein belongs to the RNA polymerase alpha chain family. As to quaternary structure, homodimer. The RNAP catalytic core consists of 2 alpha, 1 beta, 1 beta' and 1 omega subunit. When a sigma factor is associated with the core the holoenzyme is formed, which can initiate transcription.

It carries out the reaction RNA(n) + a ribonucleoside 5'-triphosphate = RNA(n+1) + diphosphate. In terms of biological role, DNA-dependent RNA polymerase catalyzes the transcription of DNA into RNA using the four ribonucleoside triphosphates as substrates. The chain is DNA-directed RNA polymerase subunit alpha from Fusobacterium nucleatum subsp. nucleatum (strain ATCC 25586 / DSM 15643 / BCRC 10681 / CIP 101130 / JCM 8532 / KCTC 2640 / LMG 13131 / VPI 4355).